The sequence spans 251 residues: Ubiquinone/menaquinone biosynthesis C-methyltransferase UbiE (251 aa).

S-adenosyl-L-methionine-binding positions include T74, D95, 123–124, and S140; that span reads NA.

Belongs to the class I-like SAM-binding methyltransferase superfamily. MenG/UbiE family.

It carries out the reaction a 2-demethylmenaquinol + S-adenosyl-L-methionine = a menaquinol + S-adenosyl-L-homocysteine + H(+). The catalysed reaction is a 2-methoxy-6-(all-trans-polyprenyl)benzene-1,4-diol + S-adenosyl-L-methionine = a 5-methoxy-2-methyl-3-(all-trans-polyprenyl)benzene-1,4-diol + S-adenosyl-L-homocysteine + H(+). The protein operates within quinol/quinone metabolism; menaquinone biosynthesis; menaquinol from 1,4-dihydroxy-2-naphthoate: step 2/2. Its pathway is cofactor biosynthesis; ubiquinone biosynthesis. Its function is as follows. Methyltransferase required for the conversion of demethylmenaquinol (DMKH2) to menaquinol (MKH2) and the conversion of 2-polyprenyl-6-methoxy-1,4-benzoquinol (DDMQH2) to 2-polyprenyl-3-methyl-6-methoxy-1,4-benzoquinol (DMQH2). The chain is Ubiquinone/menaquinone biosynthesis C-methyltransferase UbiE from Salmonella arizonae (strain ATCC BAA-731 / CDC346-86 / RSK2980).